The chain runs to 569 residues: Urease subunit alpha (569 aa).

Residues 131 to 569 (GGIDTHIHFI…LPLAQRYLLL (439 aa)) enclose the Urease domain. Ni(2+) contacts are provided by His136, His138, and Lys219. The residue at position 219 (Lys219) is an N6-carboxylysine. His221 serves as a coordination point for substrate. Ni(2+)-binding residues include His248 and His274. The active-site Proton donor is the His322. Asp362 contacts Ni(2+).

This sequence belongs to the metallo-dependent hydrolases superfamily. Urease alpha subunit family. Heterotrimer of UreA (gamma), UreB (beta) and UreC (alpha) subunits. Three heterotrimers associate to form the active enzyme. Ni cation is required as a cofactor. Post-translationally, carboxylation allows a single lysine to coordinate two nickel ions.

The protein localises to the cytoplasm. The catalysed reaction is urea + 2 H2O + H(+) = hydrogencarbonate + 2 NH4(+). It participates in nitrogen metabolism; urea degradation; CO(2) and NH(3) from urea (urease route): step 1/1. The protein is Urease subunit alpha of Synechococcus sp. (strain CC9311).